A 225-amino-acid polypeptide reads, in one-letter code: UPF0173 metal-dependent hydrolase PF1764 (225 aa).

The protein belongs to the UPF0173 family.

The sequence is that of UPF0173 metal-dependent hydrolase PF1764 from Pyrococcus furiosus (strain ATCC 43587 / DSM 3638 / JCM 8422 / Vc1).